The following is a 91-amino-acid chain: Small ribosomal subunit protein uS19 (91 aa).

Belongs to the universal ribosomal protein uS19 family.

Functionally, protein S19 forms a complex with S13 that binds strongly to the 16S ribosomal RNA. The sequence is that of Small ribosomal subunit protein uS19 from Laribacter hongkongensis (strain HLHK9).